Consider the following 344-residue polypeptide: Dihydroorotase (344 aa).

Zn(2+) is bound by residues His-13 and His-15. Substrate is bound by residues 15 to 17 (HLR) and Asn-41. Residues Lys-98, His-135, and His-173 each contribute to the Zn(2+) site. The residue at position 98 (Lys-98) is an N6-carboxylysine. His-135 is a binding site for substrate. Leu-218 is a binding site for substrate. Asp-247 is a binding site for Zn(2+). Asp-247 is a catalytic residue. His-251 and Ala-263 together coordinate substrate.

The protein belongs to the metallo-dependent hydrolases superfamily. DHOase family. Class II DHOase subfamily. Homodimer. Zn(2+) is required as a cofactor.

The catalysed reaction is (S)-dihydroorotate + H2O = N-carbamoyl-L-aspartate + H(+). Its pathway is pyrimidine metabolism; UMP biosynthesis via de novo pathway; (S)-dihydroorotate from bicarbonate: step 3/3. Functionally, catalyzes the reversible cyclization of carbamoyl aspartate to dihydroorotate. The chain is Dihydroorotase from Neisseria meningitidis serogroup B (strain ATCC BAA-335 / MC58).